A 158-amino-acid chain; its full sequence is Pyruvoyl-dependent arginine decarboxylase (158 aa).

Ser-44 carries the post-translational modification Pyruvic acid (Ser).

It belongs to the PdaD family. The cofactor is pyruvate.

It carries out the reaction L-arginine + H(+) = agmatine + CO2. The protein is Pyruvoyl-dependent arginine decarboxylase of Thermococcus sibiricus (strain DSM 12597 / MM 739).